An 872-amino-acid chain; its full sequence is Cadherin-1 (872 aa).

A signal peptide spans 1–25; that stretch reads MGLKRPWLLGAVVLLTLIQVQGGLA. Residues 26–148 constitute a propeptide that is removed on maturation; the sequence is EWTQCRMGFS…SETGLKRQKR (123 aa). Cadherin domains follow at residues 148 to 256, 257 to 370, 371 to 481, 482 to 589, and 605 to 688; these read RDWV…DPVF, TQSV…PPVF, DPTQ…APIF, LPPV…GPFL, and VFTI…MQCE. At 149-701 the chain is on the extracellular side; it reads DWVIPPIIVS…AIAGGLGISA (553 aa). Asparagine 209 carries N-linked (GlcNAc...) asparagine glycosylation. The Ca(2+) site is built by aspartate 251 and aspartate 282. N-linked (GlcNAc...) asparagine glycans are attached at residues asparagine 456, asparagine 552, asparagine 631, and asparagine 669. A helical transmembrane segment spans residues 702–722; it reads IVGILGGILALLLLLLLLLLF. The Cytoplasmic portion of the chain corresponds to 723–872; sequence VRRKKVVKEP…LADMYGGDED (150 aa). The disordered stretch occupies residues 739–758; that stretch reads ETRDNVFSYDEEGGGEEDQD. The segment covering 747–758 has biased composition (acidic residues); sequence YDEEGGGEEDQD.

In terms of assembly, homodimer. In terms of tissue distribution, abundantly expressed in intestine, stomach, liver, kidney, skin and eye. Also expressed in heart, lung, testis, ovary, muscle and brain.

The protein resides in the cell junction. It localises to the adherens junction. Its subcellular location is the cell membrane. It is found in the endosome. The protein localises to the golgi apparatus. The protein resides in the trans-Golgi network. It localises to the cytoplasm. Its subcellular location is the desmosome. In terms of biological role, cadherins are calcium-dependent cell adhesion proteins. They preferentially interact with themselves in a homophilic manner in connecting cells; cadherins may thus contribute to the sorting of heterogeneous cell types. Promotes organization of radial actin fiber structure and cellular response to contractile forces, via anchoring of radial actin fibers to CDH1 junction complexes at the cell membrane. E-cadherin is a ligand for integrin alpha-E/beta-7. This chain is Cadherin-1 (cdh1), found in Xenopus laevis (African clawed frog).